Consider the following 142-residue polypeptide: uncharacterized protein (142 aa).

Residues 1–14 (MKNVSPRRNKHYKS) are compositionally biased toward basic residues. Residues 1-40 (MKNVSPRRNKHYKSYKPQVPLKKPVLLPQHPPYRNRRKKK) form a disordered region. Residues 16–28 (KPQVPLKKPVLLP) are compositionally biased toward low complexity.

This is an uncharacterized protein from Aquifex aeolicus (strain VF5).